A 393-amino-acid chain; its full sequence is NAD(P)H-quinone oxidoreductase subunit H, chloroplastic (393 aa).

Belongs to the complex I 49 kDa subunit family. In terms of assembly, NDH is composed of at least 16 different subunits, 5 of which are encoded in the nucleus.

The protein localises to the plastid. It localises to the chloroplast thylakoid membrane. The catalysed reaction is a plastoquinone + NADH + (n+1) H(+)(in) = a plastoquinol + NAD(+) + n H(+)(out). It carries out the reaction a plastoquinone + NADPH + (n+1) H(+)(in) = a plastoquinol + NADP(+) + n H(+)(out). In terms of biological role, NDH shuttles electrons from NAD(P)H:plastoquinone, via FMN and iron-sulfur (Fe-S) centers, to quinones in the photosynthetic chain and possibly in a chloroplast respiratory chain. The immediate electron acceptor for the enzyme in this species is believed to be plastoquinone. Couples the redox reaction to proton translocation, and thus conserves the redox energy in a proton gradient. The chain is NAD(P)H-quinone oxidoreductase subunit H, chloroplastic from Brachypodium distachyon (Purple false brome).